Reading from the N-terminus, the 179-residue chain is Large ribosomal subunit protein uL6 (179 aa).

Belongs to the universal ribosomal protein uL6 family. As to quaternary structure, part of the 50S ribosomal subunit.

This protein binds to the 23S rRNA, and is important in its secondary structure. It is located near the subunit interface in the base of the L7/L12 stalk, and near the tRNA binding site of the peptidyltransferase center. The sequence is that of Large ribosomal subunit protein uL6 from Clostridium acetobutylicum (strain ATCC 824 / DSM 792 / JCM 1419 / IAM 19013 / LMG 5710 / NBRC 13948 / NRRL B-527 / VKM B-1787 / 2291 / W).